Consider the following 265-residue polypeptide: Undecaprenyl-diphosphatase 1 (265 aa).

7 helical membrane passes run 4–24, 42–62, 84–104, 108–128, 184–204, 217–237, and 245–265; these read IIIA…PISS, AKTF…ILYH, FHVF…HDVI, LFQP…MIFA, SEFS…LDLL, MFAV…VTFL, and LKPF…FVLL.

Belongs to the UppP family.

The protein localises to the cell membrane. It catalyses the reaction di-trans,octa-cis-undecaprenyl diphosphate + H2O = di-trans,octa-cis-undecaprenyl phosphate + phosphate + H(+). Functionally, catalyzes the dephosphorylation of undecaprenyl diphosphate (UPP). Confers resistance to bacitracin. The chain is Undecaprenyl-diphosphatase 1 from Bacillus thuringiensis (strain Al Hakam).